The following is a 781-amino-acid chain: Potassium transporter 5 (781 aa).

A compositionally biased stretch (polar residues) spans 1–11; it reads MTEPLHTSSNG. Residues 1–24 are disordered; the sequence is MTEPLHTSSNGGAERGPNAAFESE. Residues 1-63 are Cytoplasmic-facing; the sequence is MTEPLHTSSN…AKVGWATTLH (63 aa). The chain crosses the membrane as a helical span at residues 64–84; the sequence is LAFQSIGVVYGDMGTSPLYVF. Residues 85 to 100 are Extracellular-facing; the sequence is SSTFTNGIKDTNDILG. The chain crosses the membrane as a helical span at residues 101–121; that stretch reads VMSLIIYTVVLLPLIKYCFIV. Residues 122–187 are Cytoplasmic-facing; it reads LRANDNGDGG…EKMENSPNFK (66 aa). A helical membrane pass occupies residues 188-208; it reads IILFLVTILATSMVIGDGVLT. Residues 209–225 are Extracellular-facing; sequence PCISVLSAVGGIKESAK. The helical transmembrane segment at 226-246 threads the bilayer; the sequence is SLTQGQIAGIAIAILIVLFLV. The Cytoplasmic segment spans residues 247 to 257; sequence QRFGTDKVGYS. Residues 258 to 278 traverse the membrane as a helical segment; that stretch reads FGPIILTWFIFIAGTGVYNLF. The Extracellular segment spans residues 279-304; that stretch reads KHDTGVLKAFNPKYIVDYFERNGKQG. The chain crosses the membrane as a helical span at residues 305 to 325; sequence WISLGGVILCITGTEAMFADL. Residues 326–334 lie on the Cytoplasmic side of the membrane; that stretch reads GHFNVRAIQ. The chain crosses the membrane as a helical span at residues 335-355; it reads IGFSVVLLPSVLLAYIGQAAY. Over 356–381 the chain is Extracellular; sequence LRIYPEHVADTFYKSIPDPLYWPTFV. A helical membrane pass occupies residues 382–402; it reads VAVAAAIIASQAMISGAFAII. The Cytoplasmic portion of the chain corresponds to 403–426; it reads AQSQILGCFPRVRVIHTSTKFHGQ. The chain crosses the membrane as a helical span at residues 427–447; it reads VYIPEINYVLMVLCVAVTAIF. The Extracellular segment spans residues 448–458; it reads QTTDKIGNAYG. Residues 459-479 traverse the membrane as a helical segment; sequence IAVVFVMFITTLLVTLVMVMI. Topologically, residues 480–481 are cytoplasmic; the sequence is WK. Residues 482-502 traverse the membrane as a helical segment; that stretch reads TSLLWIALFPVIFGGAELIYL. Residues 503 to 512 are Extracellular-facing; it reads SSAFYKFTQG. Residues 513–533 form a helical membrane-spanning segment; sequence GYLPLVFSAILMFIMATWHYV. Residues 534–781 lie on the Cytoplasmic side of the membrane; the sequence is HVHRYKYELR…LLRVGMTYEI (248 aa). Residues 681–707 are disordered; sequence VTDPTSEVQDAMSSRNNSDQHTTEPRN. Over residues 683-700 the composition is skewed to polar residues; that stretch reads DPTSEVQDAMSSRNNSDQ.

The protein belongs to the HAK/KUP transporter (TC 2.A.72.3) family. In terms of tissue distribution, expressed in root epidermis, parenchyma of stele tissue and primordial of the lateral root, root-shoot junctions and leaf sheaths. Expressed in germinated embryonic tissue, young tillers, flower organs and pedicels.

It localises to the cell membrane. It carries out the reaction K(+)(in) = K(+)(out). High-affinity potassium transporter. Its potassium transporter activity does not seem to be affected by high sodium and low potassium concentrations in the extracellular environment. Invloved in salt stress tolerance by enhancing root potassium uptake and translocation to the shoot to prevent sodium influx during salt stress. Involved in the positive regulation of disease resistance against the rice grassy stunt virus by promoting potassium transport and increasing endogenous plant potassium. This Oryza sativa subsp. japonica (Rice) protein is Potassium transporter 5 (HAK5).